A 131-amino-acid polypeptide reads, in one-letter code: Methylglyoxal synthase (131 aa).

One can recognise an MGS-like domain in the interval M1–K131. Substrate contacts are provided by residues H8, K12, T34–T37, and S54–G55. The Proton donor/acceptor role is filled by D60. H87 lines the substrate pocket.

The protein belongs to the methylglyoxal synthase family.

It carries out the reaction dihydroxyacetone phosphate = methylglyoxal + phosphate. In terms of biological role, catalyzes the formation of methylglyoxal from dihydroxyacetone phosphate. This Bacillus anthracis (strain A0248) protein is Methylglyoxal synthase.